A 119-amino-acid chain; its full sequence is Large ribosomal subunit protein uL22 (119 aa).

Belongs to the universal ribosomal protein uL22 family. As to quaternary structure, part of the 50S ribosomal subunit.

Functionally, this protein binds specifically to 23S rRNA; its binding is stimulated by other ribosomal proteins, e.g. L4, L17, and L20. It is important during the early stages of 50S assembly. It makes multiple contacts with different domains of the 23S rRNA in the assembled 50S subunit and ribosome. Its function is as follows. The globular domain of the protein is located near the polypeptide exit tunnel on the outside of the subunit, while an extended beta-hairpin is found that lines the wall of the exit tunnel in the center of the 70S ribosome. This is Large ribosomal subunit protein uL22 from Trichodesmium erythraeum (strain IMS101).